A 101-amino-acid chain; its full sequence is Small ribosomal subunit protein uS10 (101 aa).

The protein belongs to the universal ribosomal protein uS10 family. Part of the 30S ribosomal subunit.

In terms of biological role, involved in the binding of tRNA to the ribosomes. The chain is Small ribosomal subunit protein uS10 from Methanocaldococcus jannaschii (strain ATCC 43067 / DSM 2661 / JAL-1 / JCM 10045 / NBRC 100440) (Methanococcus jannaschii).